We begin with the raw amino-acid sequence, 200 residues long: Small heat shock protein hspG2 (200 aa).

Residues 33–200 (NKRIDIIPSM…DNFQIKLKSI (168 aa)) form the sHSP domain. Residues 86–139 (KLQQQQQQQSEKSSQSTNNKDDDEPSIEEYEDDTKLKSNLNKNTENKDENKTTS) form a disordered region. Low complexity predominate over residues 88 to 101 (QQQQQQQSEKSSQS). Over residues 106 to 117 (DDDEPSIEEYED) the composition is skewed to acidic residues.

The protein belongs to the small heat shock protein (HSP20) family.

In Dictyostelium discoideum (Social amoeba), this protein is Small heat shock protein hspG2 (hspG2).